A 222-amino-acid chain; its full sequence is RNA chaperone ProQ (222 aa).

Over residues 94–113 (EHADHAKQQLDESKAKAAEK) the composition is skewed to basic and acidic residues. The disordered stretch occupies residues 94-171 (EHADHAKQQL…PAKLTDSDLQ (78 aa)). Over residues 114-131 (RKAKLAQQPKRKDKRQFN) the composition is skewed to basic residues. Over residues 133–148 (PKGEKSANSDHADTKR) the composition is skewed to basic and acidic residues. Residues 155-164 (NRPNTTPPAK) are compositionally biased toward low complexity.

This sequence belongs to the ProQ family.

The protein localises to the cytoplasm. Functionally, RNA chaperone with significant RNA binding, RNA strand exchange and RNA duplexing activities. The polypeptide is RNA chaperone ProQ (Alteromonas mediterranea (strain DSM 17117 / CIP 110805 / LMG 28347 / Deep ecotype)).